Consider the following 441-residue polypeptide: tRNA-2-methylthio-N(6)-dimethylallyladenosine synthase (441 aa).

One can recognise an MTTase N-terminal domain in the interval K5–E121. [4Fe-4S] cluster is bound by residues C14, C50, C84, C159, C163, and C166. The 236-residue stretch at A145–S380 folds into the Radical SAM core domain. Residues Q379–A441 form the TRAM domain.

Belongs to the methylthiotransferase family. MiaB subfamily. In terms of assembly, monomer. [4Fe-4S] cluster serves as cofactor.

The protein resides in the cytoplasm. It catalyses the reaction N(6)-dimethylallyladenosine(37) in tRNA + (sulfur carrier)-SH + AH2 + 2 S-adenosyl-L-methionine = 2-methylsulfanyl-N(6)-dimethylallyladenosine(37) in tRNA + (sulfur carrier)-H + 5'-deoxyadenosine + L-methionine + A + S-adenosyl-L-homocysteine + 2 H(+). Its function is as follows. Catalyzes the methylthiolation of N6-(dimethylallyl)adenosine (i(6)A), leading to the formation of 2-methylthio-N6-(dimethylallyl)adenosine (ms(2)i(6)A) at position 37 in tRNAs that read codons beginning with uridine. This chain is tRNA-2-methylthio-N(6)-dimethylallyladenosine synthase, found in Roseobacter denitrificans (strain ATCC 33942 / OCh 114) (Erythrobacter sp. (strain OCh 114)).